The following is an 83-amino-acid chain: Cytochrome b559 subunit alpha (83 aa).

A helical membrane pass occupies residues 21-35; sequence VIHSITIPSLFIAGW. Residue His-23 participates in heme binding.

It belongs to the PsbE/PsbF family. As to quaternary structure, heterodimer of an alpha subunit and a beta subunit. PSII is composed of 1 copy each of membrane proteins PsbA, PsbB, PsbC, PsbD, PsbE, PsbF, PsbH, PsbI, PsbJ, PsbK, PsbL, PsbM, PsbT, PsbX, PsbY, PsbZ, Psb30/Ycf12, at least 3 peripheral proteins of the oxygen-evolving complex and a large number of cofactors. It forms dimeric complexes. The cofactor is heme b.

The protein localises to the plastid. It localises to the chloroplast thylakoid membrane. In terms of biological role, this b-type cytochrome is tightly associated with the reaction center of photosystem II (PSII). PSII is a light-driven water:plastoquinone oxidoreductase that uses light energy to abstract electrons from H(2)O, generating O(2) and a proton gradient subsequently used for ATP formation. It consists of a core antenna complex that captures photons, and an electron transfer chain that converts photonic excitation into a charge separation. The sequence is that of Cytochrome b559 subunit alpha from Daucus carota (Wild carrot).